The following is a 494-amino-acid chain: DBIRD complex subunit ZNF326 (494 aa).

Disordered stretches follow at residues 1 to 22 (MDRE…QSFS), 147 to 170 (AFGG…RGQM), and 202 to 264 (KMAP…NSEK). Residues 7 to 22 (SYNQRSVNSYGNQSFS) show a composition bias toward polar residues. The Bipartite nuclear localization signal signature appears at 200 to 221 (KRKMAPPFKPVGFFGKKQKLSK). 2 consecutive C2H2 AKAP95-type zinc fingers follow at residues 273–295 (CSFC…SATH) and 365–388 (CSAC…SADH). Positions 429–494 (PFETQPDEQQ…CDPLTTTDEV (66 aa)) are disordered. Residues 433–451 (QPDEQQQEQEEEEEEEEQQ) are compositionally biased toward acidic residues.

Belongs to the AKAP95 family. Component of the DBIRD complex.

Its subcellular location is the nucleus. In terms of biological role, core component of the DBIRD complex, a multiprotein complex that acts at the interface between core mRNP particles and RNA polymerase II (RNAPII) and integrates transcript elongation with the regulation of alternative splicing. This chain is DBIRD complex subunit ZNF326 (znf326), found in Xenopus laevis (African clawed frog).